The primary structure comprises 264 residues: Thymidylate synthase (264 aa).

Arg21 serves as a coordination point for dUMP. His51 lines the (6R)-5,10-methylene-5,6,7,8-tetrahydrofolate pocket. DUMP is bound at residue 126 to 127 (RR). Cys146 (nucleophile) is an active-site residue. DUMP contacts are provided by residues 166-169 (RSCD), Asn177, and 207-209 (HLY). Position 169 (Asp169) interacts with (6R)-5,10-methylene-5,6,7,8-tetrahydrofolate. Ala263 lines the (6R)-5,10-methylene-5,6,7,8-tetrahydrofolate pocket.

This sequence belongs to the thymidylate synthase family. Bacterial-type ThyA subfamily. As to quaternary structure, homodimer.

The protein localises to the cytoplasm. It carries out the reaction dUMP + (6R)-5,10-methylene-5,6,7,8-tetrahydrofolate = 7,8-dihydrofolate + dTMP. Its pathway is pyrimidine metabolism; dTTP biosynthesis. Functionally, catalyzes the reductive methylation of 2'-deoxyuridine-5'-monophosphate (dUMP) to 2'-deoxythymidine-5'-monophosphate (dTMP) while utilizing 5,10-methylenetetrahydrofolate (mTHF) as the methyl donor and reductant in the reaction, yielding dihydrofolate (DHF) as a by-product. This enzymatic reaction provides an intracellular de novo source of dTMP, an essential precursor for DNA biosynthesis. In Shewanella sp. (strain ANA-3), this protein is Thymidylate synthase.